Reading from the N-terminus, the 168-residue chain is 2-C-methyl-D-erythritol 2,4-cyclodiphosphate synthase (168 aa).

Residues aspartate 11 and histidine 13 each coordinate a divalent metal cation. 4-CDP-2-C-methyl-D-erythritol 2-phosphate-binding positions include 11 to 13 (DVH) and 41 to 42 (HS). A divalent metal cation is bound at residue histidine 49. Residues 63-65 (DIG), 68-72 (FPDTD), 139-142 (TTTE), phenylalanine 146, and arginine 149 each bind 4-CDP-2-C-methyl-D-erythritol 2-phosphate.

Belongs to the IspF family. As to quaternary structure, homotrimer. A divalent metal cation is required as a cofactor.

It catalyses the reaction 4-CDP-2-C-methyl-D-erythritol 2-phosphate = 2-C-methyl-D-erythritol 2,4-cyclic diphosphate + CMP. It functions in the pathway isoprenoid biosynthesis; isopentenyl diphosphate biosynthesis via DXP pathway; isopentenyl diphosphate from 1-deoxy-D-xylulose 5-phosphate: step 4/6. Involved in the biosynthesis of isopentenyl diphosphate (IPP) and dimethylallyl diphosphate (DMAPP), two major building blocks of isoprenoid compounds. Catalyzes the conversion of 4-diphosphocytidyl-2-C-methyl-D-erythritol 2-phosphate (CDP-ME2P) to 2-C-methyl-D-erythritol 2,4-cyclodiphosphate (ME-CPP) with a corresponding release of cytidine 5-monophosphate (CMP). This chain is 2-C-methyl-D-erythritol 2,4-cyclodiphosphate synthase, found in Psychrobacter cryohalolentis (strain ATCC BAA-1226 / DSM 17306 / VKM B-2378 / K5).